Here is a 694-residue protein sequence, read N- to C-terminus: Polyphosphate kinase (694 aa).

Asparagine 45 serves as a coordination point for ATP. Mg(2+)-binding residues include arginine 367 and arginine 397. The Phosphohistidine intermediate role is filled by histidine 427. Positions 460, 553, and 580 each coordinate ATP.

The protein belongs to the polyphosphate kinase 1 (PPK1) family. It depends on Mg(2+) as a cofactor. Post-translationally, an intermediate of this reaction is the autophosphorylated ppk in which a phosphate is covalently linked to a histidine residue through a N-P bond.

The catalysed reaction is [phosphate](n) + ATP = [phosphate](n+1) + ADP. Catalyzes the reversible transfer of the terminal phosphate of ATP to form a long-chain polyphosphate (polyP). The protein is Polyphosphate kinase of Campylobacter jejuni (strain RM1221).